Consider the following 571-residue polypeptide: 2-succinyl-5-enolpyruvyl-6-hydroxy-3-cyclohexene-1-carboxylate synthase (571 aa).

It belongs to the TPP enzyme family. MenD subfamily. Homodimer. It depends on Mg(2+) as a cofactor. The cofactor is Mn(2+). Requires thiamine diphosphate as cofactor.

The enzyme catalyses isochorismate + 2-oxoglutarate + H(+) = 5-enolpyruvoyl-6-hydroxy-2-succinyl-cyclohex-3-ene-1-carboxylate + CO2. It functions in the pathway quinol/quinone metabolism; 1,4-dihydroxy-2-naphthoate biosynthesis; 1,4-dihydroxy-2-naphthoate from chorismate: step 2/7. Its pathway is quinol/quinone metabolism; menaquinone biosynthesis. Catalyzes the thiamine diphosphate-dependent decarboxylation of 2-oxoglutarate and the subsequent addition of the resulting succinic semialdehyde-thiamine pyrophosphate anion to isochorismate to yield 2-succinyl-5-enolpyruvyl-6-hydroxy-3-cyclohexene-1-carboxylate (SEPHCHC). This is 2-succinyl-5-enolpyruvyl-6-hydroxy-3-cyclohexene-1-carboxylate synthase from Vibrio parahaemolyticus serotype O3:K6 (strain RIMD 2210633).